The primary structure comprises 371 residues: tRNA-specific 2-thiouridylase MnmA (371 aa).

ATP contacts are provided by residues 8–15 (GMSGGVDS) and methionine 34. Positions 94–96 (NPD) are interaction with target base in tRNA. Catalysis depends on cysteine 99, which acts as the Nucleophile. Residues cysteine 99 and cysteine 195 are joined by a disulfide bond. Glycine 123 provides a ligand contact to ATP. The interval 145–147 (KDQ) is interaction with tRNA. Catalysis depends on cysteine 195, which acts as the Cysteine persulfide intermediate. Positions 309–310 (RY) are interaction with tRNA.

The protein belongs to the MnmA/TRMU family.

The protein resides in the cytoplasm. The catalysed reaction is S-sulfanyl-L-cysteinyl-[protein] + uridine(34) in tRNA + AH2 + ATP = 2-thiouridine(34) in tRNA + L-cysteinyl-[protein] + A + AMP + diphosphate + H(+). In terms of biological role, catalyzes the 2-thiolation of uridine at the wobble position (U34) of tRNA, leading to the formation of s(2)U34. The chain is tRNA-specific 2-thiouridylase MnmA from Methylococcus capsulatus (strain ATCC 33009 / NCIMB 11132 / Bath).